We begin with the raw amino-acid sequence, 673 residues long: MAEAPASPAPLSPLEVELDPEFEPQSRPRSCTWPLQRPELQASPAKPSGETAADSMIPEEEDDEDDEDGGGRAGSAMAIGGGGGSGTLGSGLLLEDSARVLAPGGQDPGSGPATAAGGLSGGTQALLQPQQPLPPPQPGAAGGSGQPRKCSSRRNAWGNLSYADLITRAIESSPDKRLTLSQIYEWMVRCVPYFKDKGDSNSSAGWKNSIRHNLSLHSRFMRVQNEGTGKSSWWIINPDGGKSGKAPRRRAVSMDNSNKYTKSRGRAAKKKAALQTAPESADDSPSQLSKWPGSPTSRSSDELDAWTDFRSRTNSNASTVSGRLSPIMASTELDEVQDDDAPLSPMLYSSSASLSPSVSKPCTVELPRLTDMAGTMNLNDGLTENLMDDLLDNITLPPSQPSPTGGLMQRSSSFPYTTKGSGLGSPTSSFNSTVFGPSSLNSLRQSPMQTIQENKPATFSSMSHYGNQTLQDLLTSDSLSHSDVMMTQSDPLMSQASTAVSAQNSRRNVMLRNDPMMSFAAQPNQGSLVNQNLLHHQHQTQGALGGSRALSNSVSNMGLSESSSLGSAKHQQQSPVSQSMQTLSDSLSGSSLYSTSANLPVMGHEKFPSDLDLDMFNGSLECDMESIIRSELMDADGLDFNFDSLISTQNVVGLNVGNFTGAKQASSQSWVPG.

The segment at 1–153 is disordered; the sequence is MAEAPASPAP…SGQPRKCSSR (153 aa). Phosphoserine; by AMPK is present on serine 30. At threonine 32 the chain carries Phosphothreonine; by PKB/AKT1. The residue at position 46 (lysine 46) is an N6-methyllysine. Over residues 57–68 the composition is skewed to acidic residues; it reads IPEEEDDEDDED. The span at 79-89 shows a compositional bias: gly residues; it reads IGGGGGSGTLG. The interval 80–108 is required for mitochondrial import; the sequence is GGGGGSGTLGSGLLLEDSARVLAPGGQDP. Lysine 149 bears the N6-methyllysine mark. The fork-head DNA-binding region spans 157–251; it reads WGNLSYADLI…KSGKAPRRRA (95 aa). Residue threonine 179 is modified to Phosphothreonine; by AMPK. A Phosphoserine; by STK4/MST1 modification is found at serine 209. The residue at position 215 (serine 215) is a Phosphoserine; by MAPKAPK5. At lysine 230 the chain carries N6-methyllysine. Residues 231–302 are disordered; the sequence is SSWWIINPDG…GSPTSRSSDE (72 aa). Lysine 242 carries the N6-acetyllysine modification. The Nuclear localization signal motif lies at 242-259; that stretch reads KSGKAPRRRAVSMDNSNK. Serine 253 bears the Phosphoserine; by PKB/AKT1 and MAPKAPK5 mark. The span at 261-272 shows a compositional bias: basic residues; sequence TKSRGRAAKKKA. An N6-methyllysine mark is found at lysine 262 and lysine 271. Serine 280 and serine 284 each carry phosphoserine. The span at 283–298 shows a compositional bias: polar residues; the sequence is DSPSQLSKWPGSPTSR. Position 290 is an N6-methyllysine (lysine 290). Serine 294 carries the post-translational modification Phosphoserine. A Phosphoserine; by CaMK2A modification is found at serine 299. Residues 300 to 673 are mediates interaction with CHUK/IKKA and IKBKB/IKKB; that stretch reads SDELDAWTDF…QASSQSWVPG (374 aa). Serine 311 carries the post-translational modification Phosphoserine. Serine 315 carries the phosphoserine; by SGK1 modification. A phosphoserine; by AMPK mark is found at serine 399 and serine 413. At lysine 419 the chain carries N6-methyllysine. Serine 421 is subject to Phosphoserine. The disordered stretch occupies residues 536–587; sequence HQHQTQGALGGSRALSNSVSNMGLSESSSLGSAKHQQQSPVSQSMQTLSDSL. The segment covering 549 to 582 has biased composition (polar residues); sequence ALSNSVSNMGLSESSSLGSAKHQQQSPVSQSMQT. Serine 551 is modified (phosphoserine; by MAPKAPK5). Serine 555 bears the Phosphoserine; by AMPK and MAPKAPK5 mark. Phosphoserine; by AMPK occurs at positions 588 and 626. A Phosphoserine; by IKKB modification is found at serine 644.

In terms of assembly, upon metabolic stress, forms a complex composed of FOXO3, SIRT3 and mitochondrial RNA polymerase POLRMT; the complex is recruited to mtDNA in a SIRT3-dependent manner. Also forms a complex composed of FOXO3, SIRT3, TFAM and POLRMT. Interacts with SIRT2; the interaction occurs independently of SIRT2 deacetylase activity. Interacts with YWHAB/14-3-3-beta and YWHAZ/14-3-3-zeta, which are required for cytosolic sequestration. Upon oxidative stress, interacts with STK4/MST1, which disrupts interaction with YWHAB/14-3-3-beta and leads to nuclear translocation. Interacts with PIM1. Interacts with DDIT3/CHOP. Interacts (deacetylated form) with SKP2. Interacts with CHUK and IKBKB. Interacts with CAMK2A, CAMK2B and calcineurin A. Interacts with NUPR1; this interaction represses FOXO3 transactivation. Post-translationally, in the presence of survival factors such as IGF1, phosphorylated on Thr-32 and Ser-253 by AKT1/PKB. This phosphorylated form then interacts with 14-3-3 proteins and is retained in the cytoplasm. Survival factor withdrawal induces dephosphorylation and promotes translocation to the nucleus where the dephosphorylated protein induces transcription of target genes and triggers apoptosis. Although AKT1/PKB doesn't appear to phosphorylate Ser-315 directly, it may activate other kinases that trigger phosphorylation at this residue. Phosphorylated by STK4/MST1 on Ser-209 upon oxidative stress, which leads to dissociation from YWHAB/14-3-3-beta and nuclear translocation. Phosphorylated by PIM1. Phosphorylation by AMPK leads to the activation of transcriptional activity without affecting subcellular localization. In response to metabolic stress, phosphorylated by AMPK on Ser-30 which mediates FOXO3 mitochondrial translocation. Phosphorylation by MAPKAPK5 promotes nuclear localization and DNA-binding, leading to induction of miR-34b and miR-34c expression, 2 post-transcriptional regulators of MYC that bind to the 3'UTR of MYC transcript and prevent its translation. Phosphorylated by CHUK/IKKA and IKBKB/IKKB. TNF-induced inactivation of FOXO3 requires its phosphorylation at Ser-644 by IKBKB/IKKB which promotes FOXO3 retention in the cytoplasm, polyubiquitination and ubiquitin-mediated proteasomal degradation. May be dephosphorylated by calcineurin A on Ser-299 which abolishes FOXO3 transcriptional activity. In cancer cells, ERK mediated-phosphorylation of Ser-12 is required for mitochondrial translocation of FOXO3 in response to metabolic stress or chemotherapeutic agents. Phosphorylation at Ser-253 promotes its degradation by the proteasome. Dephosphorylation at Ser-253 by protein phosphatase 2A (PPP2CA) promotes its stabilization; interaction with PPP2CA is enhanced by AMBRA1. Deacetylation by SIRT1 or SIRT2 stimulates interaction of FOXO3 with SKP2 and facilitates SCF(SKP2)-mediated FOXO3 ubiquitination and proteasomal degradation. Deacetylation by SIRT2 stimulates FOXO3-mediated transcriptional activity in response to oxidative stress. Deacetylated by SIRT3. Deacetylation by SIRT3 stimulates FOXO3-mediated mtDNA transcriptional activity in response to metabolic stress. In terms of processing, heavily methylated by SET9 which decreases stability, while moderately increasing transcriptional activity. The main methylation site is Lys-271. Methylation doesn't affect subcellular location. Post-translationally, polyubiquitinated. Ubiquitinated by a SCF complex containing SKP2, leading to proteasomal degradation. The N-terminus is cleaved following import into the mitochondrion. As to expression, ubiquitous.

The protein localises to the cytoplasm. Its subcellular location is the cytosol. The protein resides in the nucleus. It localises to the mitochondrion matrix. It is found in the mitochondrion outer membrane. Transcriptional activator that recognizes and binds to the DNA sequence 5'-[AG]TAAA[TC]A-3' and regulates different processes, such as apoptosis and autophagy. Acts as a positive regulator of autophagy in skeletal muscle: in starved cells, enters the nucleus following dephosphorylation and binds the promoters of autophagy genes, such as GABARAP1L, MAP1LC3B and ATG12, thereby activating their expression, resulting in proteolysis of skeletal muscle proteins. Triggers apoptosis in the absence of survival factors, including neuronal cell death upon oxidative stress. Participates in post-transcriptional regulation of MYC: following phosphorylation by MAPKAPK5, promotes induction of miR-34b and miR-34c expression, 2 post-transcriptional regulators of MYC that bind to the 3'UTR of MYC transcript and prevent its translation. In response to metabolic stress, translocates into the mitochondria where it promotes mtDNA transcription. In response to metabolic stress, translocates into the mitochondria where it promotes mtDNA transcription. Also acts as a key regulator of chondrogenic commitment of skeletal progenitor cells in response to lipid availability: when lipids levels are low, translocates to the nucleus and promotes expression of SOX9, which induces chondrogenic commitment and suppresses fatty acid oxidation. Also acts as a key regulator of regulatory T-cells (Treg) differentiation by activating expression of FOXP3. This Homo sapiens (Human) protein is Forkhead box protein O3.